The sequence spans 100 residues: Large ribosomal subunit protein uL23 (100 aa).

This sequence belongs to the universal ribosomal protein uL23 family. In terms of assembly, part of the 50S ribosomal subunit. Contacts protein L29, and trigger factor when it is bound to the ribosome.

One of the early assembly proteins it binds 23S rRNA. One of the proteins that surrounds the polypeptide exit tunnel on the outside of the ribosome. Forms the main docking site for trigger factor binding to the ribosome. The chain is Large ribosomal subunit protein uL23 from Idiomarina loihiensis (strain ATCC BAA-735 / DSM 15497 / L2-TR).